The sequence spans 363 residues: Aminopyrrolnitrin oxygenase PrnD (363 aa).

The Rieske domain maps to 29–137 (WYVAMRSNEL…TAERYGYVWV (109 aa)). [2Fe-2S] cluster contacts are provided by cysteine 69, histidine 71, cysteine 88, and histidine 91.

In terms of assembly, homodimer. [2Fe-2S] cluster is required as a cofactor. It depends on Fe cation as a cofactor. Requires FMN as cofactor.

The enzyme catalyses aminopyrrolnitrin + NADPH + 2 O2 + H(+) = pyrrolnitrin + NADP(+) + 2 H2O. It functions in the pathway antibiotic biosynthesis. Its function is as follows. Involved in the biosynthesis of the antifungal antibiotic pyrrolnitrin (PRN). Catalyzes the oxidation of the amino group of aminopyrrolnitrin (APRN) to a nitro group to form PRN. It has high substrate specificity toward physiological substrate aminopyrrolnitrin, p-aminobenzylamine (pABA), p-aminobenzyl alcohol, and p-aminophenyl alanine. This is Aminopyrrolnitrin oxygenase PrnD (prnD) from Pseudomonas fluorescens.